We begin with the raw amino-acid sequence, 256 residues long: MATSLRITGLVKEYRAGKPVLNGIDLDIAGQGLTAIIGPSGTGKSTLLRCINRLIEPTSGEIVLKDAEGTVDLARVRGQSLRRARRRIGMVFQEYNLVERLTVMENLLTGRLGYTSALNAWMRRFDPADIERAFQLLDTVGLAGFADQRADALSGGQRQRVGIARALMQRPQLLLADEPTSSLDPKTSVEIMKLLTEQGSVNGIPVLVNIHDVELARRYANRIVGMSGGHVVYDGDGKGLDATMLKTIYGGESWLE.

The ABC transporter domain occupies L5–S253. G38–S45 serves as a coordination point for ATP.

It belongs to the ABC transporter superfamily. Phosphonates importer (TC 3.A.1.9.1) family. In terms of assembly, the complex is composed of two ATP-binding proteins (PhnC), two transmembrane proteins (PhnE) and a solute-binding protein (PhnD).

The protein resides in the cell inner membrane. The enzyme catalyses phosphonate(out) + ATP + H2O = phosphonate(in) + ADP + phosphate + H(+). Its function is as follows. Part of the ABC transporter complex PhnCDE involved in phosphonates import. Responsible for energy coupling to the transport system. The sequence is that of Phosphonates import ATP-binding protein PhnC from Bordetella parapertussis (strain 12822 / ATCC BAA-587 / NCTC 13253).